The chain runs to 331 residues: Oxygen-evolving enhancer protein 1-2, chloroplastic (331 aa).

A chloroplast-targeting transit peptide spans 1–57 (MATSLQAAATFLQPAKIAASPSRNVHLRSNQTVGKSFGLDSSQARLTCSLHSDLKDF). The N-terminal 27 residues, 58 to 84 (AGKCSDAAKIAGFALATSALVVSGAGA), are a transit peptide targeting the thylakoid.

Belongs to the PsbO family.

It localises to the plastid. The protein localises to the chloroplast thylakoid membrane. Its function is as follows. Stabilizes the manganese cluster which is the primary site of water splitting. Regulates dephosphorylation and turnover of the PSII reaction center D1 protein. This Arabidopsis thaliana (Mouse-ear cress) protein is Oxygen-evolving enhancer protein 1-2, chloroplastic (PSBO2).